A 355-amino-acid chain; its full sequence is Histidine biosynthesis bifunctional protein HisB (355 aa).

The segment at 1–166 is histidinol-phosphatase; that stretch reads MKQKILFIDR…DITKEIIKRN (166 aa). The active-site Nucleophile is the Asp-9. The Mg(2+) site is built by Asp-9 and Asp-11. Asp-11 (proton donor) is an active-site residue. Zn(2+)-binding residues include Cys-93, His-95, Cys-101, and Cys-103. Position 130 (Asp-130) interacts with Mg(2+). The interval 167 to 355 is imidazoleglycerol-phosphate dehydratase; sequence RYREVIRETK…NTLPTSKGIL (189 aa).

This sequence in the N-terminal section; belongs to the histidinol-phosphatase family. In the C-terminal section; belongs to the imidazoleglycerol-phosphate dehydratase family. The cofactor is Mg(2+). Zn(2+) serves as cofactor.

It is found in the cytoplasm. The enzyme catalyses D-erythro-1-(imidazol-4-yl)glycerol 3-phosphate = 3-(imidazol-4-yl)-2-oxopropyl phosphate + H2O. It catalyses the reaction L-histidinol phosphate + H2O = L-histidinol + phosphate. It participates in amino-acid biosynthesis; L-histidine biosynthesis; L-histidine from 5-phospho-alpha-D-ribose 1-diphosphate: step 6/9. The protein operates within amino-acid biosynthesis; L-histidine biosynthesis; L-histidine from 5-phospho-alpha-D-ribose 1-diphosphate: step 8/9. The chain is Histidine biosynthesis bifunctional protein HisB from Buchnera aphidicola subsp. Schizaphis graminum (strain Sg).